We begin with the raw amino-acid sequence, 220 residues long: Ribonuclease HII (220 aa).

The RNase H type-2 domain occupies 32–220 (KHIAGIDEAG…FAPIKGRFDC (189 aa)). Residues aspartate 38, glutamate 39, and aspartate 130 each coordinate a divalent metal cation.

Belongs to the RNase HII family. Mn(2+) serves as cofactor. Requires Mg(2+) as cofactor.

The protein localises to the cytoplasm. It carries out the reaction Endonucleolytic cleavage to 5'-phosphomonoester.. Functionally, endonuclease that specifically degrades the RNA of RNA-DNA hybrids. The protein is Ribonuclease HII of Brucella canis (strain ATCC 23365 / NCTC 10854 / RM-666).